A 490-amino-acid chain; its full sequence is Flap endonuclease 1 (490 aa).

Residues Met-1 to Arg-106 are N-domain. Residue Asp-34 coordinates Mg(2+). Arg-47 and Arg-72 together coordinate DNA. Mg(2+) is bound by residues Asp-88, Glu-160, Glu-162, Asp-181, and Asp-183. The tract at residues Leu-124–Tyr-266 is I-domain. Glu-160 is a binding site for DNA. 2 residues coordinate DNA: Gly-244 and Asp-246. Position 246 (Asp-246) interacts with Mg(2+). The interaction with PCNA stretch occupies residues Ser-351–Phe-359. Disordered regions lie at residues Asn-364–Cys-396 and Ser-421–Asp-490. A compositionally biased stretch (polar residues) spans Glu-430 to Ile-442. Basic and acidic residues predominate over residues Lys-443–Glu-454. Residues Ser-455–Pro-469 are compositionally biased toward polar residues.

This sequence belongs to the XPG/RAD2 endonuclease family. FEN1 subfamily. As to quaternary structure, interacts with PCNA. Three molecules of FEN1 bind to one PCNA trimer with each molecule binding to one PCNA monomer. PCNA stimulates the nuclease activity without altering cleavage specificity. Requires Mg(2+) as cofactor. In terms of processing, phosphorylated. Phosphorylation upon DNA damage induces relocalization to the nuclear plasma.

The protein localises to the nucleus. It localises to the nucleolus. It is found in the nucleoplasm. The protein resides in the mitochondrion. Functionally, structure-specific nuclease with 5'-flap endonuclease and 5'-3' exonuclease activities involved in DNA replication and repair. During DNA replication, cleaves the 5'-overhanging flap structure that is generated by displacement synthesis when DNA polymerase encounters the 5'-end of a downstream Okazaki fragment. It enters the flap from the 5'-end and then tracks to cleave the flap base, leaving a nick for ligation. Also involved in the long patch base excision repair (LP-BER) pathway, by cleaving within the apurinic/apyrimidinic (AP) site-terminated flap. Acts as a genome stabilization factor that prevents flaps from equilibrating into structures that lead to duplications and deletions. Also possesses 5'-3' exonuclease activity on nicked or gapped double-stranded DNA, and exhibits RNase H activity. Also involved in replication and repair of rDNA and in repairing mitochondrial DNA. This Cryptosporidium parvum (strain Iowa II) protein is Flap endonuclease 1.